A 945-amino-acid polypeptide reads, in one-letter code: Kinesin-like protein KIN-UA (945 aa).

Residues methionine 1–aspartate 54 form a disordered region. The segment covering alanine 22 to proline 31 has biased composition (low complexity). One can recognise a Kinesin motor domain in the interval arginine 57–isoleucine 399. Glycine 142–threonine 149 provides a ligand contact to ATP. A D-BOX motif is present at residues arginine 369–glycine 377. Positions tyrosine 415–aspartate 644 form a coiled coil. ARM repeat units lie at residues arginine 683 to alanine 722, aspartate 724 to methionine 764, glycine 766 to glycine 806, and glutamate 808 to lysine 847.

The protein belongs to the TRAFAC class myosin-kinesin ATPase superfamily. Kinesin family. Ungrouped subfamily.

Its subcellular location is the cytoplasm. It is found in the cytoskeleton. The protein is Kinesin-like protein KIN-UA of Oryza sativa subsp. japonica (Rice).